We begin with the raw amino-acid sequence, 457 residues long: Bifunctional protein GlmU (457 aa).

Residues 1 to 228 (MEELVSVILA…SEEIIGVNSR (228 aa)) are pyrophosphorylase. Residues 9-12 (LAAG), K23, Q73, and 78-79 (GT) contribute to the UDP-N-acetyl-alpha-D-glucosamine site. D102 provides a ligand contact to Mg(2+). Residues G139, E154, N169, and N226 each contribute to the UDP-N-acetyl-alpha-D-glucosamine site. N226 provides a ligand contact to Mg(2+). The interval 229-249 (VQLSNAEKVMRRRINEKHMEN) is linker. Residues 250–457 (GVTIIDPDST…VEERIKKGRL (208 aa)) are N-acetyltransferase. 2 residues coordinate UDP-N-acetyl-alpha-D-glucosamine: R331 and K349. H361 serves as the catalytic Proton acceptor. Y364 and N375 together coordinate UDP-N-acetyl-alpha-D-glucosamine. Acetyl-CoA contacts are provided by residues 384–385 (NY), A421, and R438.

The protein in the N-terminal section; belongs to the N-acetylglucosamine-1-phosphate uridyltransferase family. It in the C-terminal section; belongs to the transferase hexapeptide repeat family. In terms of assembly, homotrimer. Mg(2+) serves as cofactor.

Its subcellular location is the cytoplasm. The enzyme catalyses alpha-D-glucosamine 1-phosphate + acetyl-CoA = N-acetyl-alpha-D-glucosamine 1-phosphate + CoA + H(+). It catalyses the reaction N-acetyl-alpha-D-glucosamine 1-phosphate + UTP + H(+) = UDP-N-acetyl-alpha-D-glucosamine + diphosphate. It participates in nucleotide-sugar biosynthesis; UDP-N-acetyl-alpha-D-glucosamine biosynthesis; N-acetyl-alpha-D-glucosamine 1-phosphate from alpha-D-glucosamine 6-phosphate (route II): step 2/2. The protein operates within nucleotide-sugar biosynthesis; UDP-N-acetyl-alpha-D-glucosamine biosynthesis; UDP-N-acetyl-alpha-D-glucosamine from N-acetyl-alpha-D-glucosamine 1-phosphate: step 1/1. It functions in the pathway bacterial outer membrane biogenesis; LPS lipid A biosynthesis. Its function is as follows. Catalyzes the last two sequential reactions in the de novo biosynthetic pathway for UDP-N-acetylglucosamine (UDP-GlcNAc). The C-terminal domain catalyzes the transfer of acetyl group from acetyl coenzyme A to glucosamine-1-phosphate (GlcN-1-P) to produce N-acetylglucosamine-1-phosphate (GlcNAc-1-P), which is converted into UDP-GlcNAc by the transfer of uridine 5-monophosphate (from uridine 5-triphosphate), a reaction catalyzed by the N-terminal domain. This Caldanaerobacter subterraneus subsp. tengcongensis (strain DSM 15242 / JCM 11007 / NBRC 100824 / MB4) (Thermoanaerobacter tengcongensis) protein is Bifunctional protein GlmU.